The primary structure comprises 192 residues: Elongation factor P (192 aa).

Belongs to the elongation factor P family.

The protein localises to the cytoplasm. Its pathway is protein biosynthesis; polypeptide chain elongation. Its function is as follows. Involved in peptide bond synthesis. Stimulates efficient translation and peptide-bond synthesis on native or reconstituted 70S ribosomes in vitro. Probably functions indirectly by altering the affinity of the ribosome for aminoacyl-tRNA, thus increasing their reactivity as acceptors for peptidyl transferase. The chain is Elongation factor P from Borreliella afzelii (strain PKo) (Borrelia afzelii).